A 485-amino-acid polypeptide reads, in one-letter code: Betaine aldehyde dehydrogenase (485 aa).

3 residues coordinate K(+): T23, I24, and D90. Residue 147 to 149 participates in NAD(+) binding; sequence GAW. The Charge relay system role is filled by K159. Residues 173–176 and 226–229 contribute to the NAD(+) site; these read KPSE and EVGT. A K(+)-binding site is contributed by L241. E247 (proton acceptor) is an active-site residue. The NAD(+) site is built by G249, C281, and E382. C281 (nucleophile) is an active-site residue. C281 is modified (cysteine sulfenic acid (-SOH)). The K(+) site is built by K452 and G455. Catalysis depends on E459, which acts as the Charge relay system.

This sequence belongs to the aldehyde dehydrogenase family. In terms of assembly, dimer of dimers. Requires K(+) as cofactor.

It carries out the reaction betaine aldehyde + NAD(+) + H2O = glycine betaine + NADH + 2 H(+). It participates in amine and polyamine biosynthesis; betaine biosynthesis via choline pathway; betaine from betaine aldehyde: step 1/1. Involved in the biosynthesis of the osmoprotectant glycine betaine. Catalyzes the irreversible oxidation of betaine aldehyde to the corresponding acid. The polypeptide is Betaine aldehyde dehydrogenase (Marinomonas sp. (strain MWYL1)).